The sequence spans 260 residues: Triosephosphate isomerase (260 aa).

Position 11 to 13 (11 to 13 (NWK)) interacts with substrate. Catalysis depends on H103, which acts as the Electrophile. The active-site Proton acceptor is E175. Residues G181, S220, and 241–242 (GG) contribute to the substrate site.

This sequence belongs to the triosephosphate isomerase family. As to quaternary structure, homodimer.

The protein resides in the cytoplasm. It carries out the reaction D-glyceraldehyde 3-phosphate = dihydroxyacetone phosphate. Its pathway is carbohydrate biosynthesis; gluconeogenesis. It functions in the pathway carbohydrate degradation; glycolysis; D-glyceraldehyde 3-phosphate from glycerone phosphate: step 1/1. In terms of biological role, involved in the gluconeogenesis. Catalyzes stereospecifically the conversion of dihydroxyacetone phosphate (DHAP) to D-glyceraldehyde-3-phosphate (G3P). The protein is Triosephosphate isomerase of Shewanella sp. (strain W3-18-1).